The sequence spans 99 residues: uncharacterized protein (99 aa).

This is an uncharacterized protein from Escherichia coli O157:H7.